A 108-amino-acid chain; its full sequence is Nucleoid-associated protein PLES_37951 (108 aa).

Disordered stretches follow at residues M1 to E25 and N87 to F108. A compositionally biased stretch (polar residues) spans N87–M98.

This sequence belongs to the YbaB/EbfC family. Homodimer.

It is found in the cytoplasm. It localises to the nucleoid. Functionally, binds to DNA and alters its conformation. May be involved in regulation of gene expression, nucleoid organization and DNA protection. The sequence is that of Nucleoid-associated protein PLES_37951 from Pseudomonas aeruginosa (strain LESB58).